The chain runs to 291 residues: Ribosomal RNA small subunit methyltransferase I (291 aa).

The protein belongs to the methyltransferase superfamily. RsmI family.

It localises to the cytoplasm. The enzyme catalyses cytidine(1402) in 16S rRNA + S-adenosyl-L-methionine = 2'-O-methylcytidine(1402) in 16S rRNA + S-adenosyl-L-homocysteine + H(+). Catalyzes the 2'-O-methylation of the ribose of cytidine 1402 (C1402) in 16S rRNA. The chain is Ribosomal RNA small subunit methyltransferase I from Neisseria meningitidis serogroup A / serotype 4A (strain DSM 15465 / Z2491).